Consider the following 328-residue polypeptide: uncharacterized protein (328 aa).

Coiled-coil stretches lie at residues 67–190 (FKEQ…VLEE) and 223–251 (MAQRQKQEEVQEVLQEAEKTHQATLDNMM).

This is an uncharacterized protein from Mus musculus (Mouse).